Reading from the N-terminus, the 226-residue chain is uncharacterized protein (226 aa).

The first 18 residues, 1–18 (MRRIGLCISLLVTVLVMS), serve as a signal peptide directing secretion.

This is an uncharacterized protein from Bacillus subtilis (strain 168).